The sequence spans 399 residues: Argininosuccinate synthase (399 aa).

8–16 (AYSGGLDTS) is a binding site for ATP. L-citrulline-binding residues include Y87 and S92. An ATP-binding site is contributed by G117. T119, N123, and D124 together coordinate L-aspartate. N123 contacts L-citrulline. 5 residues coordinate L-citrulline: R127, S176, S185, E261, and Y273.

The protein belongs to the argininosuccinate synthase family. Type 1 subfamily. In terms of assembly, homotetramer.

It is found in the cytoplasm. The enzyme catalyses L-citrulline + L-aspartate + ATP = 2-(N(omega)-L-arginino)succinate + AMP + diphosphate + H(+). The protein operates within amino-acid biosynthesis; L-arginine biosynthesis; L-arginine from L-ornithine and carbamoyl phosphate: step 2/3. This Clostridioides difficile (strain 630) (Peptoclostridium difficile) protein is Argininosuccinate synthase.